A 121-amino-acid polypeptide reads, in one-letter code: Large ribosomal subunit protein uL18 (121 aa).

A compositionally biased stretch (basic residues) spans 1-22 (MIKKPDKKTLRQGKHKRVRRKV). The interval 1 to 23 (MIKKPDKKTLRQGKHKRVRRKVA) is disordered.

Belongs to the universal ribosomal protein uL18 family. In terms of assembly, part of the 50S ribosomal subunit; part of the 5S rRNA/L5/L18/L25 subcomplex. Contacts the 5S and 23S rRNAs.

Functionally, this is one of the proteins that bind and probably mediate the attachment of the 5S RNA into the large ribosomal subunit, where it forms part of the central protuberance. The chain is Large ribosomal subunit protein uL18 from Syntrophomonas wolfei subsp. wolfei (strain DSM 2245B / Goettingen).